A 141-amino-acid polypeptide reads, in one-letter code: Translation initiation factor 2 subunit beta (141 aa).

It belongs to the eIF-2-beta/eIF-5 family. As to quaternary structure, heterotrimer composed of an alpha, a beta and a gamma chain.

Its function is as follows. eIF-2 functions in the early steps of protein synthesis by forming a ternary complex with GTP and initiator tRNA. The sequence is that of Translation initiation factor 2 subunit beta from Sulfolobus acidocaldarius (strain ATCC 33909 / DSM 639 / JCM 8929 / NBRC 15157 / NCIMB 11770).